Here is a 130-residue protein sequence, read N- to C-terminus: Small ribosomal subunit protein uS9 (130 aa).

This sequence belongs to the universal ribosomal protein uS9 family.

The chain is Small ribosomal subunit protein uS9 from Bacillus cytotoxicus (strain DSM 22905 / CIP 110041 / 391-98 / NVH 391-98).